The following is a 324-amino-acid chain: Beta-ketoacyl-[acyl-carrier-protein] synthase III (324 aa).

Catalysis depends on residues Cys111 and His251. Residues 252 to 256 (QANTR) form an ACP-binding region. Asn281 is an active-site residue.

It belongs to the thiolase-like superfamily. FabH family. Homodimer.

It localises to the plastid. The protein localises to the chloroplast. It catalyses the reaction malonyl-[ACP] + acetyl-CoA + H(+) = 3-oxobutanoyl-[ACP] + CO2 + CoA. It participates in lipid metabolism; fatty acid biosynthesis. Functionally, catalyzes the condensation reaction of fatty acid synthesis by the addition to an acyl acceptor of two carbons from malonyl-ACP. Catalyzes the first condensation reaction which initiates fatty acid synthesis and may therefore play a role in governing the total rate of fatty acid production. Possesses both acetoacetyl-ACP synthase and acetyl transacylase activities. Its substrate specificity determines the biosynthesis of branched-chain and/or straight-chain of fatty acids. The sequence is that of Beta-ketoacyl-[acyl-carrier-protein] synthase III from Pyropia yezoensis (Susabi-nori).